A 560-amino-acid polypeptide reads, in one-letter code: Protein SINE1 (560 aa).

Glycine 2 carries the post-translational modification N-acetylglycine. An ARMADILLO-type fold region spans residues 7 to 287 (PILRQELANL…VRGAAYEAMM (281 aa)). In terms of domain architecture, KASH spans 517-560 (KKKKKKMSYAKLVIAISFVVVALFATVILMVNQDDDVGYYTVPT). A helical transmembrane segment spans residues 528–548 (LVIAISFVVVALFATVILMVN). Positions 557–560 (TVPT) match the Required for nuclear localization motif.

In terms of assembly, interacts with SUN1 and SUN2. Binds to F-actin. Preferentially expressed in guards cells, but also detected in root cells.

Its subcellular location is the nucleus membrane. Functionally, plays a role in nucleus positioning in guard cells. This Arabidopsis thaliana (Mouse-ear cress) protein is Protein SINE1.